The primary structure comprises 228 residues: Superoxide dismutase [Mn], mitochondrial (228 aa).

Residues Met1–Gly24 constitute a mitochondrion transit peptide. Residues His52, His100, Asp189, and His193 each coordinate Mn(2+).

This sequence belongs to the iron/manganese superoxide dismutase family. Homotetramer. Requires Mn(2+) as cofactor. In terms of tissue distribution, expressed most abundantly in parts of the plant which exhibit a high metabolic activity. Expressed in pre-shooting flower buds, vegetative buds, immature fruits and fully expanded leaves of basal shoots and seedlings.

It is found in the mitochondrion matrix. The catalysed reaction is 2 superoxide + 2 H(+) = H2O2 + O2. Functionally, destroys superoxide anion radicals which are normally produced within the cells and which are toxic to biological systems. This Prunus persica (Peach) protein is Superoxide dismutase [Mn], mitochondrial (SOD).